The chain runs to 163 residues: CDP-archaeol synthase (163 aa).

5 helical membrane passes run 4–24 (LLLG…APFI), 52–72 (LLLS…FLGI), 75–95 (IIIG…GAFI), 107–127 (APIL…ISFN), and 128–148 (VNLN…LHMF).

The protein belongs to the CDP-archaeol synthase family. It depends on Mg(2+) as a cofactor.

The protein resides in the cell membrane. It carries out the reaction 2,3-bis-O-(geranylgeranyl)-sn-glycerol 1-phosphate + CTP + H(+) = CDP-2,3-bis-O-(geranylgeranyl)-sn-glycerol + diphosphate. It participates in membrane lipid metabolism; glycerophospholipid metabolism. Functionally, catalyzes the formation of CDP-2,3-bis-(O-geranylgeranyl)-sn-glycerol (CDP-archaeol) from 2,3-bis-(O-geranylgeranyl)-sn-glycerol 1-phosphate (DGGGP) and CTP. This reaction is the third ether-bond-formation step in the biosynthesis of archaeal membrane lipids. In Sulfolobus acidocaldarius (strain ATCC 33909 / DSM 639 / JCM 8929 / NBRC 15157 / NCIMB 11770), this protein is CDP-archaeol synthase.